The sequence spans 474 residues: ATP synthase subunit beta (474 aa).

An ATP-binding site is contributed by 152-159 (GGAGVGKT).

This sequence belongs to the ATPase alpha/beta chains family. In terms of assembly, F-type ATPases have 2 components, CF(1) - the catalytic core - and CF(0) - the membrane proton channel. CF(1) has five subunits: alpha(3), beta(3), gamma(1), delta(1), epsilon(1). CF(0) has three main subunits: a(1), b(2) and c(9-12). The alpha and beta chains form an alternating ring which encloses part of the gamma chain. CF(1) is attached to CF(0) by a central stalk formed by the gamma and epsilon chains, while a peripheral stalk is formed by the delta and b chains.

It is found in the cell inner membrane. The catalysed reaction is ATP + H2O + 4 H(+)(in) = ADP + phosphate + 5 H(+)(out). Functionally, produces ATP from ADP in the presence of a proton gradient across the membrane. The catalytic sites are hosted primarily by the beta subunits. This is ATP synthase subunit beta from Paramagnetospirillum magneticum (strain ATCC 700264 / AMB-1) (Magnetospirillum magneticum).